Reading from the N-terminus, the 49-residue chain is MYKLWLLFDPRRTLVALSAFLFVLGLIIHFISLSTDRFNWLEGKPAVRA.

Residues 1 to 12 (MYKLWLLFDPRR) lie on the Cytoplasmic side of the membrane. Residues 13-33 (TLVALSAFLFVLGLIIHFISL) form a helical membrane-spanning segment. His-29 is a binding site for a bacteriochlorophyll. Residues 34–49 (STDRFNWLEGKPAVRA) are Periplasmic-facing.

The protein belongs to the antenna complex alpha subunit family. In terms of assembly, the core complex is formed by different alpha and beta chains, binding bacteriochlorophyll molecules, and arranged most probably in tetrameric structures disposed around the reaction center. The non-pigmented gamma chains may constitute additional components.

It localises to the cell inner membrane. Functionally, antenna complexes are light-harvesting systems, which transfer the excitation energy to the reaction centers. The protein is Light-harvesting protein B-880 alpha chain of Rhodoblastus acidophilus (Rhodopseudomonas acidophila).